Consider the following 188-residue polypeptide: Acireductone dioxygenase (188 aa).

Fe(2+)-binding residues include histidine 97, histidine 99, glutamate 103, and histidine 141. Ni(2+) is bound by residues histidine 97, histidine 99, glutamate 103, and histidine 141.

Belongs to the acireductone dioxygenase (ARD) family. In terms of assembly, monomer. It depends on Fe(2+) as a cofactor. Ni(2+) serves as cofactor.

It catalyses the reaction 1,2-dihydroxy-5-(methylsulfanyl)pent-1-en-3-one + O2 = 3-(methylsulfanyl)propanoate + CO + formate + 2 H(+). The catalysed reaction is 1,2-dihydroxy-5-(methylsulfanyl)pent-1-en-3-one + O2 = 4-methylsulfanyl-2-oxobutanoate + formate + 2 H(+). Its pathway is amino-acid biosynthesis; L-methionine biosynthesis via salvage pathway; L-methionine from S-methyl-5-thio-alpha-D-ribose 1-phosphate: step 5/6. In terms of biological role, catalyzes 2 different reactions between oxygen and the acireductone 1,2-dihydroxy-3-keto-5-methylthiopentene (DHK-MTPene) depending upon the metal bound in the active site. Fe-containing acireductone dioxygenase (Fe-ARD) produces formate and 2-keto-4-methylthiobutyrate (KMTB), the alpha-ketoacid precursor of methionine in the methionine recycle pathway. Ni-containing acireductone dioxygenase (Ni-ARD) produces methylthiopropionate, carbon monoxide and formate, and does not lie on the methionine recycle pathway. The polypeptide is Acireductone dioxygenase (Xanthomonas oryzae pv. oryzae (strain MAFF 311018)).